We begin with the raw amino-acid sequence, 1278 residues long: Papilin (1278 aa).

A signal peptide spans 1–18; it reads MRLLLLVPLLLAPAPGSS. TSP type-1 domains lie at 26-80, 304-361, 362-421, 423-481, and 484-539; these read SDTW…ESCP, PGFS…HPCP, ETKR…ACNL, RCAA…EDCP, and SDQA…QPCH. 6 cysteine pairs are disulfide-bonded: Cys-38-Cys-74, Cys-42-Cys-79, Cys-53-Cys-64, Cys-316-Cys-355, Cys-320-Cys-360, and Cys-331-Cys-343. The interval 544–632 is disordered; it reads VPSMQDVHTP…SGSGPHDCRH (89 aa). The segment covering 582–599 has biased composition (basic and acidic residues); that stretch reads PSARGDHRGERGDPRGDQ. Residues 608-620 are compositionally biased toward low complexity; that stretch reads PAPSLQQPPYQQP. 3 cysteine pairs are disulfide-bonded: Cys-754–Cys-804, Cys-763–Cys-787, and Cys-779–Cys-800. Positions 754 to 804 constitute a BPTI/Kunitz inhibitor domain; it reads CLLPSAHGSCADWAARWYFVASVGQCNRFWYGGCHGNANNFASEQECMSSC. Residues 805 to 901 are disordered; the sequence is QGSLHGPRRP…GGDAGSPAPP (97 aa). Ig-like C2-type domains follow at residues 900 to 995, 1033 to 1128, and 1133 to 1218; these read PPFH…LRII, PSSH…VQLR, and LTIS…TEVK. The cysteines at positions 931 and 978 are disulfide-linked. The segment at 1014 to 1042 is disordered; the sequence is RDPAQDFGQAGAAGPLGAIPSSHPQPANR. Intrachain disulfides connect Cys-1065/Cys-1112 and Cys-1154/Cys-1202. A PLAC domain is found at 1231–1270; that stretch reads PGRDCVDQPELANCDLILQAQLCGNEYYSSFCCASCSRFQ.

The protein belongs to the papilin family.

The protein localises to the secreted. The protein is Papilin (PAPLN) of Homo sapiens (Human).